The chain runs to 83 residues: Polcalcin Bra r 2 (83 aa).

EF-hand domains lie at 5 to 40 and 43 to 75; these read TEKAEHDRIFKKFDANGDGKISASELGDALKNLGSV and DDIKRMMAEIDTDGDGYISYQEFSDFASANRGL. The Ca(2+) site is built by aspartate 18, asparagine 20, aspartate 22, lysine 24, glutamate 29, aspartate 53, aspartate 55, aspartate 57, tyrosine 59, and glutamate 64.

The protein is Polcalcin Bra r 2 of Brassica campestris (Field mustard).